A 329-amino-acid chain; its full sequence is Putative GTPase Obg (329 aa).

One can recognise an Obg domain in the interval 1 to 159 (MQFIDQARIM…WPLQLELKLL (159 aa)). The region spanning 160–328 (AEVGIIGLPN…LKTQIWQQLG (169 aa)) is the OBG-type G domain. GTP-binding positions include 166–173 (GLPNAGKS), 191–195 (FTTLI), 213–216 (DIPG), 280–283 (SKIE), and 309–311 (SSA). Serine 173 and threonine 193 together coordinate Mg(2+).

The protein belongs to the TRAFAC class OBG-HflX-like GTPase superfamily. OBG GTPase family. In terms of assembly, monomer. Requires Mg(2+) as cofactor.

The protein resides in the plastid. It is found in the organellar chromatophore. Its function is as follows. An essential GTPase which binds GTP, GDP and possibly (p)ppGpp with moderate affinity, with high nucleotide exchange rates and a fairly low GTP hydrolysis rate. This Paulinella chromatophora protein is Putative GTPase Obg.